The primary structure comprises 316 residues: 4-hydroxy-3-methylbut-2-enyl diphosphate reductase (316 aa).

Position 12 (C12) interacts with [4Fe-4S] cluster. Residues H41 and H74 each coordinate (2E)-4-hydroxy-3-methylbut-2-enyl diphosphate. Residues H41 and H74 each coordinate dimethylallyl diphosphate. H41 and H74 together coordinate isopentenyl diphosphate. Position 96 (C96) interacts with [4Fe-4S] cluster. A (2E)-4-hydroxy-3-methylbut-2-enyl diphosphate-binding site is contributed by H124. H124 serves as a coordination point for dimethylallyl diphosphate. H124 serves as a coordination point for isopentenyl diphosphate. Residue E126 is the Proton donor of the active site. Residue T168 participates in (2E)-4-hydroxy-3-methylbut-2-enyl diphosphate binding. C198 contributes to the [4Fe-4S] cluster binding site. (2E)-4-hydroxy-3-methylbut-2-enyl diphosphate is bound by residues S226, S227, N228, and S270. S226, S227, N228, and S270 together coordinate dimethylallyl diphosphate. 4 residues coordinate isopentenyl diphosphate: S226, S227, N228, and S270.

Belongs to the IspH family. It depends on [4Fe-4S] cluster as a cofactor.

The catalysed reaction is isopentenyl diphosphate + 2 oxidized [2Fe-2S]-[ferredoxin] + H2O = (2E)-4-hydroxy-3-methylbut-2-enyl diphosphate + 2 reduced [2Fe-2S]-[ferredoxin] + 2 H(+). The enzyme catalyses dimethylallyl diphosphate + 2 oxidized [2Fe-2S]-[ferredoxin] + H2O = (2E)-4-hydroxy-3-methylbut-2-enyl diphosphate + 2 reduced [2Fe-2S]-[ferredoxin] + 2 H(+). Its pathway is isoprenoid biosynthesis; dimethylallyl diphosphate biosynthesis; dimethylallyl diphosphate from (2E)-4-hydroxy-3-methylbutenyl diphosphate: step 1/1. It functions in the pathway isoprenoid biosynthesis; isopentenyl diphosphate biosynthesis via DXP pathway; isopentenyl diphosphate from 1-deoxy-D-xylulose 5-phosphate: step 6/6. Functionally, catalyzes the conversion of 1-hydroxy-2-methyl-2-(E)-butenyl 4-diphosphate (HMBPP) into a mixture of isopentenyl diphosphate (IPP) and dimethylallyl diphosphate (DMAPP). Acts in the terminal step of the DOXP/MEP pathway for isoprenoid precursor biosynthesis. The chain is 4-hydroxy-3-methylbut-2-enyl diphosphate reductase from Marinobacter nauticus (strain ATCC 700491 / DSM 11845 / VT8) (Marinobacter aquaeolei).